Reading from the N-terminus, the 327-residue chain is 4-hydroxyproline 2-epimerase (327 aa).

Cys85 acts as the Proton acceptor in catalysis. Substrate-binding positions include 86–87 (GH), His205, and Asp231. Cys235 (proton donor) is an active-site residue. 236–237 (GT) provides a ligand contact to substrate.

It belongs to the proline racemase family.

It catalyses the reaction trans-4-hydroxy-L-proline = cis-4-hydroxy-D-proline. Functionally, catalyzes the epimerization of trans-4-hydroxy-L-proline (t4LHyp) to cis-4-hydroxy-D-proline (c4DHyp). Displays no proline racemase activity. In Roseibium alexandrii (strain DSM 17067 / NCIMB 14079 / DFL-11) (Labrenzia alexandrii), this protein is 4-hydroxyproline 2-epimerase.